The sequence spans 343 residues: General stress protein 30 (343 aa).

The protein belongs to the polysaccharide pyruvyl transferase family.

In Bacillus subtilis (strain 168), this protein is General stress protein 30 (yxaB).